Consider the following 310-residue polypeptide: Protein-L-isoaspartate O-methyltransferase (310 aa).

Disordered regions lie at residues Met-1 to Lys-42 and Ser-64 to Val-90. The segment covering Glu-14 to Ala-32 has biased composition (basic and acidic residues). Residues Ser-64–Ala-81 show a composition bias toward low complexity. Ser-157 is an active-site residue.

The protein belongs to the methyltransferase superfamily. L-isoaspartyl/D-aspartyl protein methyltransferase family.

The protein localises to the cytoplasm. The catalysed reaction is [protein]-L-isoaspartate + S-adenosyl-L-methionine = [protein]-L-isoaspartate alpha-methyl ester + S-adenosyl-L-homocysteine. Its function is as follows. Catalyzes the methyl esterification of L-isoaspartyl residues in peptides and proteins that result from spontaneous decomposition of normal L-aspartyl and L-asparaginyl residues. It plays a role in the repair and/or degradation of damaged proteins. In Burkholderia lata (strain ATCC 17760 / DSM 23089 / LMG 22485 / NCIMB 9086 / R18194 / 383), this protein is Protein-L-isoaspartate O-methyltransferase.